The following is a 428-amino-acid chain: 5-methylthioadenosine/S-adenosylhomocysteine deaminase (428 aa).

Zn(2+)-binding residues include His-65 and His-67. 3 residues coordinate substrate: Glu-94, Arg-158, and His-184. Zn(2+) is bound at residue His-211. Residues Glu-214 and Asp-299 each coordinate substrate. Asp-299 contacts Zn(2+).

This sequence belongs to the metallo-dependent hydrolases superfamily. MTA/SAH deaminase family. Zn(2+) serves as cofactor.

It carries out the reaction S-adenosyl-L-homocysteine + H2O + H(+) = S-inosyl-L-homocysteine + NH4(+). The catalysed reaction is S-methyl-5'-thioadenosine + H2O + H(+) = S-methyl-5'-thioinosine + NH4(+). Its function is as follows. Catalyzes the deamination of 5-methylthioadenosine and S-adenosyl-L-homocysteine into 5-methylthioinosine and S-inosyl-L-homocysteine, respectively. Is also able to deaminate adenosine. This chain is 5-methylthioadenosine/S-adenosylhomocysteine deaminase, found in Moorella thermoacetica (strain ATCC 39073 / JCM 9320).